A 173-amino-acid chain; its full sequence is ATP-dependent protease subunit HslV (173 aa).

T2 is a catalytic residue. Residues G158, D161, and S164 each coordinate Na(+).

Belongs to the peptidase T1B family. HslV subfamily. In terms of assembly, a double ring-shaped homohexamer of HslV is capped on each side by a ring-shaped HslU homohexamer. The assembly of the HslU/HslV complex is dependent on binding of ATP.

It is found in the cytoplasm. The catalysed reaction is ATP-dependent cleavage of peptide bonds with broad specificity.. With respect to regulation, allosterically activated by HslU binding. In terms of biological role, protease subunit of a proteasome-like degradation complex believed to be a general protein degrading machinery. This Mannheimia haemolytica (Pasteurella haemolytica) protein is ATP-dependent protease subunit HslV.